Reading from the N-terminus, the 516-residue chain is GMP synthase [glutamine-hydrolyzing] (516 aa).

Positions 10–201 (KIIVLDFGSQ…AFDVCGAVAN (192 aa)) constitute a Glutamine amidotransferase type-1 domain. Cys87 acts as the Nucleophile in catalysis. Catalysis depends on residues His175 and Glu177. One can recognise a GMPS ATP-PPase domain in the interval 202–391 (WTMADFIDMQ…LGIPHDLVWR (190 aa)). 229–235 (SGGVDSS) is a binding site for ATP.

In terms of assembly, homodimer.

It catalyses the reaction XMP + L-glutamine + ATP + H2O = GMP + L-glutamate + AMP + diphosphate + 2 H(+). It participates in purine metabolism; GMP biosynthesis; GMP from XMP (L-Gln route): step 1/1. Its function is as follows. Catalyzes the synthesis of GMP from XMP. The sequence is that of GMP synthase [glutamine-hydrolyzing] from Lactobacillus acidophilus (strain ATCC 700396 / NCK56 / N2 / NCFM).